The chain runs to 244 residues: Thiol S-methyltransferase TMT1A (244 aa).

Residues 1-28 (MELTIFILRLAIYILTFPLYLLNFLGLW) are targeting to lipid droplets. The N-terminal stretch at 1 to 29 (MELTIFILRLAIYILTFPLYLLNFLGLWS) is a signal peptide.

It belongs to the methyltransferase superfamily. (Microbial infection) Interacts with HCV non-structural protein 4B/NS4B (via C-terminal region); this interaction may promote the recruitment of NS4B in the proximity of lipid droplet. In terms of assembly, self-associates. Interacts with SNRNP200; this interaction may promote the odontogenic differentiation. In terms of processing, methylated at lysine residues most likely by EZH2. In terms of tissue distribution, expressed in the liver.

The protein localises to the lipid droplet. The protein resides in the endoplasmic reticulum. Its subcellular location is the membrane. It is found in the microsome. It localises to the cytoplasm. The protein localises to the cytosol. The catalysed reaction is a thiol + S-adenosyl-L-methionine = a methyl thioether + S-adenosyl-L-homocysteine + H(+). The enzyme catalyses an adenosine in mRNA + S-adenosyl-L-methionine = an N(6)-methyladenosine in mRNA + S-adenosyl-L-homocysteine + H(+). Its activity is regulated as follows. Inhibited by 2,3-dichloro-alpha-methylbenzylamine (DCMB). Thiol S-methyltransferase that catalyzes the transfer of a methyl group from S-adenosyl-L-methionine to alkyl and phenolic thiol-containing acceptor substrates. Together with TMT1B accounts for most of S-thiol methylation activity in the endoplasmic reticulum of hepatocytes. Able to methylate the N6 position of adenosine residues in long non-coding RNAs (lncRNAs). May facilitate lncRNAs transfer into exosomes at the tumor-stroma interface. Promotes osteogenic and odontogenic differentiation by regulating the expression of genes involved in stem cell differentiation and survival. Targeted from the endoplasmic reticulum to lipid droplets, where it recruits cellular proteins to form functional organelles. In terms of biological role, (Microbial infection) May be involved in the assembly and release stages of hepatitis C virus (HCV) life cycle and thus play a crucial role in HCV propagation. The protein is Thiol S-methyltransferase TMT1A of Homo sapiens (Human).